A 179-amino-acid polypeptide reads, in one-letter code: Orotate phosphoribosyltransferase (179 aa).

Residues R94, K95, K98, H100, and 120–128 (EDTSTTGNS) each bind 5-phospho-alpha-D-ribose 1-diphosphate. Orotate contacts are provided by T124 and R152.

It belongs to the purine/pyrimidine phosphoribosyltransferase family. PyrE subfamily. As to quaternary structure, homodimer. Mg(2+) is required as a cofactor.

It carries out the reaction orotidine 5'-phosphate + diphosphate = orotate + 5-phospho-alpha-D-ribose 1-diphosphate. The protein operates within pyrimidine metabolism; UMP biosynthesis via de novo pathway; UMP from orotate: step 1/2. Its function is as follows. Catalyzes the transfer of a ribosyl phosphate group from 5-phosphoribose 1-diphosphate to orotate, leading to the formation of orotidine monophosphate (OMP). The polypeptide is Orotate phosphoribosyltransferase (Mycobacterium bovis (strain ATCC BAA-935 / AF2122/97)).